A 182-amino-acid polypeptide reads, in one-letter code: UPF0397 protein SPH_0594 (182 aa).

A run of 5 helical transmembrane segments spans residues 10–30 (VVAVGIGAALFVVIGMINIPT), 46–66 (LLSIIFGPIIGLLVGVIGHAI), 73–93 (YGLWWTWIIASGLFGLVVGLF), 109–129 (ILIFNLIQLLANALVWGVLAP), and 148–168 (IVAGIANGVSVAIAGTLLLLA).

Belongs to the UPF0397 family.

The protein resides in the cell membrane. The chain is UPF0397 protein SPH_0594 from Streptococcus pneumoniae (strain Hungary19A-6).